Consider the following 323-residue polypeptide: MKNILVTGGLGFIGSNFVNHISSKYDNVNIYVYDIGDYCASVENVEWNNRTKLIKGDIRNFDLIMHTLTEHEIDTIVHFAAHSHVDNSFKNSLAFTETNVFGTHVLLECSRMYGKLKLFFHMSTDEVYGEIDTTDTSREVSLLCPTNPYAATKAGAEHIVKSYFLSYKLPIIIARCNNVYGRNQYPEKLIPKFICSLLDGKKLHIQGTGNSRRNFIHAIDVADAVDLVINNGVIGETYNIGVTNEHSVLDVAQILCDIAGVNLENQLEYVPDRLFNDFRYNITNDKIKSLGWEQSRKDFKKELVELFDWYKVNRHRYNIPGSQ.

Thr-124 contacts substrate. The active-site Proton donor is the Asp-125. Active-site proton acceptor residues include Glu-126 and Tyr-149.

The protein belongs to the NAD(P)-dependent epimerase/dehydratase family. dTDP-glucose dehydratase subfamily. NAD(+) is required as a cofactor.

It carries out the reaction dTDP-alpha-D-glucose = dTDP-4-dehydro-6-deoxy-alpha-D-glucose + H2O. This Acanthamoeba polyphaga mimivirus (APMV) protein is Putative dTDP-D-glucose 4,6-dehydratase.